We begin with the raw amino-acid sequence, 541 residues long: Protein yellow (541 aa).

The first 21 residues, 1-21 (MFQDKGWILVTLITLVTPSWA), serve as a signal peptide directing secretion. N-linked (GlcNAc...) asparagine glycosylation is found at asparagine 144 and asparagine 215. A disordered region spans residues 443-463 (QKPQTSWASSPPPPSRTYLPA).

This sequence belongs to the major royal jelly protein family.

It localises to the secreted. In terms of biological role, controls the pigmentation pattern of the adult cuticle and larval mouth parts. This chain is Protein yellow (y), found in Drosophila melanogaster (Fruit fly).